A 517-amino-acid chain; its full sequence is Light-independent protochlorophyllide reductase subunit B (517 aa).

Position 36 (D36) interacts with [4Fe-4S] cluster. D285 (proton donor) is an active-site residue. G420–L421 contacts substrate.

This sequence belongs to the ChlB/BchB/BchZ family. Protochlorophyllide reductase is composed of three subunits; BchL, BchN and BchB. Forms a heterotetramer of two BchB and two BchN subunits. The cofactor is [4Fe-4S] cluster.

It carries out the reaction chlorophyllide a + oxidized 2[4Fe-4S]-[ferredoxin] + 2 ADP + 2 phosphate = protochlorophyllide a + reduced 2[4Fe-4S]-[ferredoxin] + 2 ATP + 2 H2O. The protein operates within porphyrin-containing compound metabolism; bacteriochlorophyll biosynthesis (light-independent). In terms of biological role, component of the dark-operative protochlorophyllide reductase (DPOR) that uses Mg-ATP and reduced ferredoxin to reduce ring D of protochlorophyllide (Pchlide) to form chlorophyllide a (Chlide). This reaction is light-independent. The NB-protein (BchN-BchB) is the catalytic component of the complex. This chain is Light-independent protochlorophyllide reductase subunit B, found in Bradyrhizobium sp. (strain BTAi1 / ATCC BAA-1182).